The chain runs to 176 residues: MRKHLSWWWLATVCMLLFSHLSAVQTRGIKHRIKWNRKALPSTAQITEAQVAENRPGAFIKQGRKLDIDFGAEGNRYYEANYWQFPDGIHYNGCSEANVTKEAFVTGCINATQAANQGEFQKPDNKLHQQVLWRLVQELCSLKHCEFWLERGAGLRVTMHQPVLLCLLALIWLTVK.

A signal peptide spans 1-25 (MRKHLSWWWLATVCMLLFSHLSAVQ). The flexible tail stretch occupies residues 27–50 (RGIKHRIKWNRKALPSTAQITEAQ). T43 is a glycosylation site (O-linked (GalNAc...) threonine). The globular stretch occupies residues 51–152 (VAENRPGAFI…KHCEFWLERG (102 aa)). Cystine bridges form between C94–C145 and C108–C140. N-linked (GlcNAc...) asparagine glycans are attached at residues N98 and N110. Residues 122–139 (KPDNKLHQQVLWRLVQEL) form a cu(2+) binding region. Residue G152 is the site of GPI-anchor amidated glycine attachment. A propeptide spans 153-176 (AGLRVTMHQPVLLCLLALIWLTVK) (removed in mature form).

The protein belongs to the prion family. N-glycosylated. N-glycosylated at two distinct sites. In terms of processing, O-glycosylated. As to expression, expressed in testis, in Sertoli cells, ejaculated spermatozoa and in seminal fluid (at protein level).

Its subcellular location is the cell membrane. Its function is as follows. Required for normal acrosome reaction and for normal male fertility. Can bind Cu(2+). This is Prion-like protein doppel (PRND) from Homo sapiens (Human).